Consider the following 760-residue polypeptide: Probable 3',5'-cyclic phosphodiesterase pde-6 (760 aa).

Disordered regions lie at residues 1 to 47 (MGDR…AATA) and 410 to 429 (KRSVVDAHREKRGSHGERRR). Positions 33–47 (PAARRGAQRAPAATA) are enriched in low complexity. Over residues 412–429 (SVVDAHREKRGSHGERRR) the composition is skewed to basic and acidic residues. Residues 426 to 750 (ERRRVSADVK…EKWKVMTSQW (325 aa)) enclose the PDEase domain. The active-site Proton donor is His-502. A divalent metal cation contacts are provided by His-506, His-542, Asp-543, and Asp-656.

This sequence belongs to the cyclic nucleotide phosphodiesterase family. Requires a divalent metal cation as cofactor.

The catalysed reaction is a nucleoside 3',5'-cyclic phosphate + H2O = a nucleoside 5'-phosphate + H(+). The protein is Probable 3',5'-cyclic phosphodiesterase pde-6 (pde-6) of Caenorhabditis elegans.